Here is a 148-residue protein sequence, read N- to C-terminus: Large ribosomal subunit protein bL9 (148 aa).

Belongs to the bacterial ribosomal protein bL9 family.

Functionally, binds to the 23S rRNA. This chain is Large ribosomal subunit protein bL9, found in Frankia casuarinae (strain DSM 45818 / CECT 9043 / HFP020203 / CcI3).